The following is a 154-amino-acid chain: Peptide deformylase (154 aa).

The Fe cation site is built by Cys90 and His132. Glu133 is an active-site residue. His136 is a binding site for Fe cation.

This sequence belongs to the polypeptide deformylase family. Fe(2+) serves as cofactor.

The enzyme catalyses N-terminal N-formyl-L-methionyl-[peptide] + H2O = N-terminal L-methionyl-[peptide] + formate. In terms of biological role, removes the formyl group from the N-terminal Met of newly synthesized proteins. Requires at least a dipeptide for an efficient rate of reaction. N-terminal L-methionine is a prerequisite for activity but the enzyme has broad specificity at other positions. The chain is Peptide deformylase from Halothermothrix orenii (strain H 168 / OCM 544 / DSM 9562).